The following is a 532-amino-acid chain: CTP synthase (532 aa).

Positions 1 to 267 (MTKYIFVTGG…DDIVLEHLQL (267 aa)) are amidoligase domain. Ser-13 lines the CTP pocket. A UTP-binding site is contributed by Ser-13. 14-19 (SIGKGI) lines the ATP pocket. Residue Tyr-54 participates in L-glutamine binding. Residue Asp-71 participates in ATP binding. Mg(2+)-binding residues include Asp-71 and Glu-141. Residues 148–150 (DIE), 188–193 (KTKPTQ), and Lys-224 each bind CTP. Residues 188–193 (KTKPTQ) and Lys-224 contribute to the UTP site. In terms of domain architecture, Glutamine amidotransferase type-1 spans 292-532 (RIGLVGKYVS…DFVGAALNNK (241 aa)). Residue Gly-354 coordinates L-glutamine. Cys-381 functions as the Nucleophile; for glutamine hydrolysis in the catalytic mechanism. Residues 382–385 (LGMQ), Glu-405, and Arg-462 each bind L-glutamine. Catalysis depends on residues His-507 and Glu-509.

The protein belongs to the CTP synthase family. In terms of assembly, homotetramer.

It carries out the reaction UTP + L-glutamine + ATP + H2O = CTP + L-glutamate + ADP + phosphate + 2 H(+). The catalysed reaction is L-glutamine + H2O = L-glutamate + NH4(+). The enzyme catalyses UTP + NH4(+) + ATP = CTP + ADP + phosphate + 2 H(+). The protein operates within pyrimidine metabolism; CTP biosynthesis via de novo pathway; CTP from UDP: step 2/2. Allosterically activated by GTP, when glutamine is the substrate; GTP has no effect on the reaction when ammonia is the substrate. The allosteric effector GTP functions by stabilizing the protein conformation that binds the tetrahedral intermediate(s) formed during glutamine hydrolysis. Inhibited by the product CTP, via allosteric rather than competitive inhibition. Its function is as follows. Catalyzes the ATP-dependent amination of UTP to CTP with either L-glutamine or ammonia as the source of nitrogen. Regulates intracellular CTP levels through interactions with the four ribonucleotide triphosphates. In Listeria innocua serovar 6a (strain ATCC BAA-680 / CLIP 11262), this protein is CTP synthase.